The primary structure comprises 1019 residues: DNA topoisomerase 1 (1019 aa).

Residues Met1–Glu160 are disordered. Positions Lys46–Asp56 are enriched in basic and acidic residues. Polar residues predominate over residues Pro62–Gly78. Composition is skewed to acidic residues over residues Asp83–Ser93 and Ser107–Asp136. 3 interaction with DNA regions span residues Lys379–Tyr380, Arg442–Lys447, and Ser556–Lys558. The Topo IB-type catalytic domain occupies Thr386–Asn860. Residues Glu716 to Glu737 are disordered. The active-site O-(3'-phospho-DNA)-tyrosine intermediate is Tyr822. 2 disordered regions span residues Gly843 to Ser890 and Met940 to Val1019. The segment covering Lys854–Lys863 has biased composition (basic and acidic residues). Residues Pro864–Ala879 show a composition bias toward basic residues. Basic and acidic residues-rich tracts occupy residues Met940–Gly950 and Thr980–Thr996. Residues Glu997 to Asp1012 show a composition bias toward acidic residues.

The protein belongs to the type IB topoisomerase family. In terms of assembly, monomer.

The catalysed reaction is ATP-independent breakage of single-stranded DNA, followed by passage and rejoining.. Releases the supercoiling and torsional tension of DNA introduced during the DNA replication and transcription by transiently cleaving and rejoining one strand of the DNA duplex. Introduces a single-strand break via transesterification at a target site in duplex DNA. The scissile phosphodiester is attacked by the catalytic tyrosine of the enzyme, resulting in the formation of a DNA-(3'-phosphotyrosyl)-enzyme intermediate and the expulsion of a 5'-OH DNA strand. The free DNA strand then rotates around the intact phosphodiester bond on the opposing strand, thus removing DNA supercoils. Finally, in the religation step, the DNA 5'-OH attacks the covalent intermediate to expel the active-site tyrosine and restore the DNA phosphodiester backbone. The polypeptide is DNA topoisomerase 1 (TOP1) (Mycosarcoma maydis (Corn smut fungus)).